A 167-amino-acid polypeptide reads, in one-letter code: Thioredoxin M-type, chloroplastic (167 aa).

Residues 1-53 (MAMETCFRAWALHAPAGSKDRLLVGNLVLPSKRALAPLSVGRVATRRPRHVCQ) constitute a chloroplast transit peptide. The region spanning 54 to 165 (SKNAVDEVVV…LTTLIDKYIG (112 aa)) is the Thioredoxin domain. The cysteines at positions 89 and 92 are disulfide-linked.

The protein belongs to the thioredoxin family. Plant M-type subfamily. As to quaternary structure, forms a complex with heterodimeric ferredoxin-thioredoxin reductase (FTR) and ferredoxin.

It localises to the plastid. The protein localises to the chloroplast. Its function is as follows. Participates in various redox reactions through the reversible oxidation of the active center dithiol to a disulfide. The M form is known to activate NADP-malate dehydrogenase. The sequence is that of Thioredoxin M-type, chloroplastic (TRM1) from Zea mays (Maize).